We begin with the raw amino-acid sequence, 271 residues long: Formamidopyrimidine-DNA glycosylase (271 aa).

Proline 2 (schiff-base intermediate with DNA) is an active-site residue. Catalysis depends on glutamate 3, which acts as the Proton donor. Catalysis depends on lysine 56, which acts as the Proton donor; for beta-elimination activity. DNA contacts are provided by histidine 89, arginine 107, and arginine 151. The segment at 236 to 270 adopts an FPG-type zinc-finger fold; that stretch reads MVYDRAGLPCRVCAAPIKSIRQGQRSSFYCATCQK. Residue arginine 260 is the Proton donor; for delta-elimination activity of the active site.

This sequence belongs to the FPG family. In terms of assembly, monomer. Zn(2+) serves as cofactor.

The catalysed reaction is Hydrolysis of DNA containing ring-opened 7-methylguanine residues, releasing 2,6-diamino-4-hydroxy-5-(N-methyl)formamidopyrimidine.. It carries out the reaction 2'-deoxyribonucleotide-(2'-deoxyribose 5'-phosphate)-2'-deoxyribonucleotide-DNA = a 3'-end 2'-deoxyribonucleotide-(2,3-dehydro-2,3-deoxyribose 5'-phosphate)-DNA + a 5'-end 5'-phospho-2'-deoxyribonucleoside-DNA + H(+). Functionally, involved in base excision repair of DNA damaged by oxidation or by mutagenic agents. Acts as a DNA glycosylase that recognizes and removes damaged bases. Has a preference for oxidized purines, such as 7,8-dihydro-8-oxoguanine (8-oxoG). Has AP (apurinic/apyrimidinic) lyase activity and introduces nicks in the DNA strand. Cleaves the DNA backbone by beta-delta elimination to generate a single-strand break at the site of the removed base with both 3'- and 5'-phosphates. The polypeptide is Formamidopyrimidine-DNA glycosylase (Polaromonas naphthalenivorans (strain CJ2)).